The chain runs to 120 residues: Holo-[acyl-carrier-protein] synthase (120 aa).

Residues aspartate 8 and glutamate 58 each coordinate Mg(2+).

The protein belongs to the P-Pant transferase superfamily. AcpS family. The cofactor is Mg(2+).

The protein resides in the cytoplasm. The enzyme catalyses apo-[ACP] + CoA = holo-[ACP] + adenosine 3',5'-bisphosphate + H(+). Functionally, transfers the 4'-phosphopantetheine moiety from coenzyme A to a Ser of acyl-carrier-protein. The chain is Holo-[acyl-carrier-protein] synthase from Limosilactobacillus reuteri (strain DSM 20016) (Lactobacillus reuteri).